A 3623-amino-acid chain; its full sequence is Cubilin (3623 aa).

The first 20 residues, 1 to 20 (MSSQFLWGFVTLLMIAELDG), serve as a signal peptide directing secretion. Positions 21-32 (KTGKPEQRGQKR) are cleaved as a propeptide — removed in mature form. Residues 39–46 (PRMTTEEG) form an interaction with AMN region. N-linked (GlcNAc...) asparagine glycosylation is present at asparagine 95. One can recognise an EGF-like 1 domain in the interval 129 to 165 (ERKVCSSNPCLNGGTCVNLHDSFVCICPSQWKGLFCS). 9 disulfide bridges follow: cysteine 133-cysteine 144, cysteine 138-cysteine 153, cysteine 155-cysteine 164, cysteine 171-cysteine 187, cysteine 181-cysteine 196, cysteine 198-cysteine 207, cysteine 264-cysteine 277, cysteine 271-cysteine 286, and cysteine 289-cysteine 300. An EGF-like 2; calcium-binding domain is found at 167-208 (DVNECVVYSGTPFGCQSGSTCVNTVGSFRCDCTPDTYGPQCA). In terms of domain architecture, EGF-like 3; calcium-binding spans 260–301 (DKDECSLQPSPCSEHAQCFNTQGSFYCGACPKGWQGNGYECQ). Residues 302-345 (DINECEINNGGCSQAPLVPCLNTPGSFSCGNCPAGFSGDGRVCT) enclose the EGF-like 4; calcium-binding domain. 2 EGF-like domains span residues 346-385 (PVDI…YTGN) and 395-430 (LSNI…QNCT). Intrachain disulfides connect cysteine 350-cysteine 363, cysteine 357-cysteine 376, cysteine 399-cysteine 409, cysteine 404-cysteine 418, cysteine 420-cysteine 429, cysteine 436-cysteine 447, cysteine 441-cysteine 456, cysteine 458-cysteine 467, cysteine 474-cysteine 500, cysteine 527-cysteine 549, cysteine 590-cysteine 616, cysteine 643-cysteine 665, and cysteine 708-cysteine 734. Asparagine 428 carries an N-linked (GlcNAc...) asparagine glycan. The 37-residue stretch at 432–468 (NINDCSSNPCLNGGTCIDGINGFTCDCTSSWTGYYCQ) folds into the EGF-like 7; calcium-binding domain. 27 consecutive CUB domains span residues 474-586 (CGGI…WEAK), 590-702 (CGGI…YLTT), 708-816 (CGGN…YQVA), 817-928 (CGGM…FSSD), 932-1042 (CGEV…YEAI), 1048-1161 (CLYD…WDGS), 1165-1277 (CGGN…FRQR), 1278-1389 (CDNV…WFTH), 1391-1506 (CGGE…WRAV), 1510-1619 (CGGI…FREE), 1620-1734 (CGGR…YSAS), 1738-1850 (CGGS…FKNI), 1852-1963 (GNNN…WFAV), 1978-2091 (CGGF…FHKS), 2092-2213 (CGGY…YEAK), 2217-2334 (CGGT…YSIA), 2336-2448 (CGGT…FKSS), 2452-2565 (CGGD…YTST), 2570-2687 (CGGF…YSFT), 2689-2801 (CGGI…WTTN), 2805-2919 (CGGT…FISR), 2920-3035 (CGRT…YRAI), 3037-3150 (CGGI…FRET), 3157-3274 (CGGY…YTFV), 3278-3393 (CGGT…YQIA), 3395-3507 (CNRE…WTSS), and 3511-3623 (CGGT…MWSS). An N-linked (GlcNAc...) asparagine glycan is attached at asparagine 491. N-linked (GlcNAc...) asparagine glycosylation is found at asparagine 711 and asparagine 749. Residues cysteine 761 and cysteine 779 are joined by a disulfide bond. An N-linked (GlcNAc...) asparagine glycan is attached at asparagine 781. Cysteine 817 and cysteine 842 are disulfide-bonded. The N-linked (GlcNAc...) asparagine glycan is linked to asparagine 857. 2 disulfide bridges follow: cysteine 869-cysteine 891 and cysteine 932-cysteine 958. An N-linked (GlcNAc...) asparagine glycan is attached at asparagine 957. Residue glutamate 980 coordinates Ca(2+). A glycan (N-linked (GlcNAc...) asparagine) is linked at asparagine 984. Residues cysteine 985 and cysteine 1005 are joined by a disulfide bond. 3 residues coordinate Ca(2+): aspartate 988, aspartate 1027, and leucine 1030. Cysteine 1048 and cysteine 1074 are oxidised to a cystine. Ca(2+) contacts are provided by glutamate 1096, aspartate 1105, and aspartate 1146. Residues cysteine 1165 and cysteine 1191 are joined by a disulfide bond. Asparagine 1168 carries an N-linked (GlcNAc...) asparagine glycan. Glutamate 1213, aspartate 1221, aspartate 1262, glycine 1264, and glutamine 1265 together coordinate Ca(2+). Cysteine 1218 and cysteine 1240 are oxidised to a cystine. Cysteine 1278 and cysteine 1306 are oxidised to a cystine. Asparagine 1285, asparagine 1307, and asparagine 1319 each carry an N-linked (GlcNAc...) asparagine glycan. Ca(2+) is bound at residue glutamate 1328. N-linked (GlcNAc...) asparagine glycosylation is present at asparagine 1332. The cysteines at positions 1333 and 1351 are disulfide-linked. Ca(2+) is bound by residues aspartate 1336, aspartate 1373, and isoleucine 1375. Intrachain disulfides connect cysteine 1391-cysteine 1417 and cysteine 1444-cysteine 1466. Asparagine 1500 is a glycosylation site (N-linked (GlcNAc...) asparagine). Cysteine 1510 and cysteine 1536 are joined by a disulfide. 3 N-linked (GlcNAc...) asparagine glycosylation sites follow: asparagine 1551, asparagine 1646, and asparagine 1671. Cysteine 1620 and cysteine 1647 are joined by a disulfide. 3 disulfide bridges follow: cysteine 1675–cysteine 1697, cysteine 1738–cysteine 1764, and cysteine 1791–cysteine 1812. N-linked (GlcNAc...) asparagine glycans are attached at residues asparagine 1802 and asparagine 1819. 3 disulfide bridges follow: cysteine 1905-cysteine 1927, cysteine 1978-cysteine 2006, and cysteine 2032-cysteine 2054. Asparagine 2085 and asparagine 2117 each carry an N-linked (GlcNAc...) asparagine glycan. Cystine bridges form between cysteine 2092/cysteine 2118 and cysteine 2217/cysteine 2247. Asparagine 2274 is a glycosylation site (N-linked (GlcNAc...) asparagine). Intrachain disulfides connect cysteine 2275/cysteine 2297, cysteine 2336/cysteine 2363, cysteine 2390/cysteine 2411, cysteine 2452/cysteine 2478, and cysteine 2505/cysteine 2527. The N-linked (GlcNAc...) asparagine glycan is linked to asparagine 2400. Residues asparagine 2531, asparagine 2581, and asparagine 2610 are each glycosylated (N-linked (GlcNAc...) asparagine). Cysteines 2570 and 2599 form a disulfide. Intrachain disulfides connect cysteine 2628/cysteine 2649, cysteine 2689/cysteine 2715, cysteine 2742/cysteine 2764, cysteine 2805/cysteine 2831, cysteine 2860/cysteine 2883, cysteine 2920/cysteine 2946, and cysteine 2977/cysteine 2999. N-linked (GlcNAc...) asparagine glycosylation is found at asparagine 2813, asparagine 2875, asparagine 2945, and asparagine 2989. A Phosphothreonine modification is found at threonine 3008. 2 disulfide bridges follow: cysteine 3037/cysteine 3064 and cysteine 3091/cysteine 3113. 4 N-linked (GlcNAc...) asparagine glycosylation sites follow: asparagine 3042, asparagine 3106, asparagine 3125, and asparagine 3165. Disulfide bonds link cysteine 3157-cysteine 3185 and cysteine 3215-cysteine 3237. Residues asparagine 3268, asparagine 3283, and asparagine 3290 are each glycosylated (N-linked (GlcNAc...) asparagine). Intrachain disulfides connect cysteine 3278–cysteine 3306 and cysteine 3332–cysteine 3354. Asparagine 3357, asparagine 3400, and asparagine 3430 each carry an N-linked (GlcNAc...) asparagine glycan. Cysteine 3395 and cysteine 3421 form a disulfide bridge. 3 cysteine pairs are disulfide-bonded: cysteine 3448–cysteine 3470, cysteine 3511–cysteine 3537, and cysteine 3564–cysteine 3586. An N-linked (GlcNAc...) asparagine glycan is attached at asparagine 3533.

As to quaternary structure, interacts with AMN. Component of the cubam complex composed of one CUBN trimer and one AMN chain. The cubam complex can dimerize. Interacts with LRP2 in a dual-receptor complex in a calcium-dependent manner. Found in a complex with PID1/PCLI1, LRP1 and CUBNI. Interacts with LRP1 and PID1/PCLI1. The precursor is cleaved by a trans-Golgi proteinase furin, removing a propeptide. Post-translationally, N-glycosylated. Expressed to intestinal, renal and yalk sac apical membranes. In kidney, expressed in the proximal tubule.

Its subcellular location is the cell membrane. It is found in the endosome membrane. The protein resides in the lysosome membrane. Its function is as follows. Endocytic receptor which plays a role in lipoprotein, vitamin and iron metabolism by facilitating their uptake. Acts together with LRP2 to mediate endocytosis of high-density lipoproteins, GC, hemoglobin, ALB, TF and SCGB1A1. Acts together with AMN to mediate endocytosis of the CBLIF-cobalamin complex. Binds to ALB, MB, Kappa and lambda-light chains, TF, hemoglobin, GC, SCGB1A1, APOA1, high density lipoprotein, and the CBLIF-cobalamin complex. Ligand binding requires calcium. Serves as important transporter in several absorptive epithelia, including intestine, renal proximal tubules and embryonic yolk sac. May play an important role in the development of the peri-implantation embryo through internalization of APOA1 and cholesterol. Binds to LGALS3 at the maternal-fetal interface. This chain is Cubilin (Cubn), found in Rattus norvegicus (Rat).